Here is a 933-residue protein sequence, read N- to C-terminus: Phospholipase SGR2 (933 aa).

The segment covering 1 to 14 (MEDRETHLGTREVN) has biased composition (basic and acidic residues). The segment at 1–22 (MEDRETHLGTREVNETSPDLLK) is disordered. Residue Ser444 is part of the active site. Disordered stretches follow at residues 475–517 (PDEE…GQDN) and 553–598 (RGGQ…ESVN). A compositionally biased stretch (polar residues) spans 505–517 (QLNNPEKITGQDN). Positions 553–563 (RGGQEDDHHDS) are enriched in basic and acidic residues. Positions 593-631 (DKESVNSNNEERIKLLQDEVNSLRSKVAQLLSENARILS) form a coiled coil. Residues 669-868 (LEFKVDTFFA…ALFIIKHLYR (200 aa)) enclose the DDHD domain. The tract at residues 871 to 903 (PDGPNSPTESTEGDDSPKDSSRPHSWIDRREAD) is disordered. Residues 885-902 (DSPKDSSRPHSWIDRREA) show a composition bias toward basic and acidic residues.

In terms of assembly, forms oligomers. In terms of tissue distribution, expressed in roots, hypocotyls, leaves, stems and floral buds, and, at low levels, in siliques.

Its subcellular location is the vacuole membrane. Functionally, involved in vacuolar formation or function (e.g. formation of vacuolar membrane 'bulbs'). Required for amyloplast sedimentation in the endodermis during shoot gravitropism, which are thus acting as statoliths. Particularly important for the negative gravitropism leading to leaf movement observed in darkness. In Arabidopsis thaliana (Mouse-ear cress), this protein is Phospholipase SGR2 (SGR2).